Here is a 244-residue protein sequence, read N- to C-terminus: Triosephosphate isomerase (244 aa).

9–11 (NWK) serves as a coordination point for substrate. The active-site Electrophile is the His-93. Glu-160 acts as the Proton acceptor in catalysis. Residues Gly-166 and Ser-206 each coordinate substrate.

Belongs to the triosephosphate isomerase family. As to quaternary structure, homodimer.

The protein resides in the cytoplasm. The catalysed reaction is D-glyceraldehyde 3-phosphate = dihydroxyacetone phosphate. Its pathway is carbohydrate biosynthesis; gluconeogenesis. It functions in the pathway carbohydrate degradation; glycolysis; D-glyceraldehyde 3-phosphate from glycerone phosphate: step 1/1. Functionally, involved in the gluconeogenesis. Catalyzes stereospecifically the conversion of dihydroxyacetone phosphate (DHAP) to D-glyceraldehyde-3-phosphate (G3P). This Mycoplasma genitalium (strain ATCC 33530 / DSM 19775 / NCTC 10195 / G37) (Mycoplasmoides genitalium) protein is Triosephosphate isomerase.